Here is a 141-residue protein sequence, read N- to C-terminus: Large ribosomal subunit protein uL11 (141 aa).

Belongs to the universal ribosomal protein uL11 family. As to quaternary structure, part of the ribosomal stalk of the 50S ribosomal subunit. Interacts with L10 and the large rRNA to form the base of the stalk. L10 forms an elongated spine to which L12 dimers bind in a sequential fashion forming a multimeric L10(L12)X complex. Post-translationally, one or more lysine residues are methylated.

Its function is as follows. Forms part of the ribosomal stalk which helps the ribosome interact with GTP-bound translation factors. The polypeptide is Large ribosomal subunit protein uL11 (Pediococcus pentosaceus (strain ATCC 25745 / CCUG 21536 / LMG 10740 / 183-1w)).